The sequence spans 385 residues: 8-amino-7-oxononanoate synthase (385 aa).

Substrate is bound at residue Arg-21. 108-109 (GF) contacts pyridoxal 5'-phosphate. His-133 contacts substrate. Pyridoxal 5'-phosphate-binding residues include Ser-179, His-207, and Thr-233. Position 236 is an N6-(pyridoxal phosphate)lysine (Lys-236). Thr-352 contacts substrate.

Belongs to the class-II pyridoxal-phosphate-dependent aminotransferase family. BioF subfamily. In terms of assembly, homodimer. Pyridoxal 5'-phosphate serves as cofactor.

The enzyme catalyses 6-carboxyhexanoyl-[ACP] + L-alanine + H(+) = (8S)-8-amino-7-oxononanoate + holo-[ACP] + CO2. It participates in cofactor biosynthesis; biotin biosynthesis. In terms of biological role, catalyzes the decarboxylative condensation of pimeloyl-[acyl-carrier protein] and L-alanine to produce 8-amino-7-oxononanoate (AON), [acyl-carrier protein], and carbon dioxide. This chain is 8-amino-7-oxononanoate synthase, found in Salmonella typhimurium (strain LT2 / SGSC1412 / ATCC 700720).